The sequence spans 326 residues: 3-dehydrosphinganine reductase TSC10A (326 aa).

Residues 1–7 lie on the Lumenal side of the membrane; it reads MAAISPL. A helical transmembrane segment spans residues 8–28; the sequence is FLLFLIPIIPLSLLAILALIV. Residues 29–264 are Cytoplasmic-facing; that stretch reads RPRPIKIPIK…KAMDGIKAGN (236 aa). NADPH is bound by residues Gly46, Ser48, Ser49, Gly50, Arg71, Lys75, and Asp97. The GXSXG motif lies at 46 to 50; it reads GGSSG. The Proton donor role is filled by Ser174. The Proton acceptor role is filled by Tyr188. Positions 188 and 192 each coordinate NADP(+). Catalysis depends on Lys192, which acts as the Lowers pKa of active site Tyr. Residues 265 to 285 traverse the membrane as a helical segment; the sequence is FTVSCNFEGFLLSLATTGMSP. Topologically, residues 286–288 are lumenal; it reads QRS. Residues 289–309 traverse the membrane as a helical segment; the sequence is FWLAFLEVITAGPIRLIALFF. Residues 310–326 lie on the Cytoplasmic side of the membrane; that stretch reads QWDWYKAIEKWSKTKTK.

Belongs to the short-chain dehydrogenases/reductases (SDR) family. In terms of tissue distribution, expressed in roots, leaves, stems, flowers and siliques.

It localises to the endoplasmic reticulum membrane. It catalyses the reaction sphinganine + NADP(+) = 3-oxosphinganine + NADPH + H(+). Its pathway is lipid metabolism; sphingolipid metabolism. In terms of biological role, catalyzes the reduction of 3'-oxosphinganine (3-ketodihydrosphingosine/KDS) to sphinganine (dihydrosphingosine/DHS), the second step of de novo sphingolipid biosynthesis. In plants, sphingolipids seems to play a critical role in mineral ion homeostasis, most likely through their involvement in the ion transport functionalities of membrane systems in the root. Lacks stereospecificity and can also produce L-threo-DHS in addition to D-erythro-DHS. This Arabidopsis thaliana (Mouse-ear cress) protein is 3-dehydrosphinganine reductase TSC10A (TSC10A).